Reading from the N-terminus, the 118-residue chain is Large ribosomal subunit protein bL20 (118 aa).

This sequence belongs to the bacterial ribosomal protein bL20 family.

In terms of biological role, binds directly to 23S ribosomal RNA and is necessary for the in vitro assembly process of the 50S ribosomal subunit. It is not involved in the protein synthesizing functions of that subunit. The polypeptide is Large ribosomal subunit protein bL20 (Salmonella arizonae (strain ATCC BAA-731 / CDC346-86 / RSK2980)).